The following is a 188-amino-acid chain: Putative manganese efflux pump MntP (188 aa).

6 consecutive transmembrane segments (helical) span residues 2 to 22 (LYIE…AVSV), 40 to 60 (IASV…TMGL), 66 to 86 (ICAF…GKMI), 107 to 127 (LCGL…SLAI), 133 to 153 (LLQA…GVYF), and 167 to 187 (LIGG…HLFF).

It belongs to the MntP (TC 9.B.29) family.

The protein resides in the cell inner membrane. Its function is as follows. Probably functions as a manganese efflux pump. This chain is Putative manganese efflux pump MntP, found in Parabacteroides distasonis (strain ATCC 8503 / DSM 20701 / CIP 104284 / JCM 5825 / NCTC 11152).